The chain runs to 398 residues: Putative FBD-associated F-box protein At5g56700 (398 aa).

The 47-residue stretch at 1 to 47 folds into the F-box domain; that stretch reads MAKISDLSDELLVKILSFLPTKEAVSTSCLSKQWEFLWMWLSKLEFY. The FBD domain occupies 340 to 388; sequence WKNNKSSVPKCLLESLETFEFAGYIGTPEERDFLSYIFKHARCLKSSSI.

This chain is Putative FBD-associated F-box protein At5g56700, found in Arabidopsis thaliana (Mouse-ear cress).